A 4171-amino-acid polypeptide reads, in one-letter code: Cytoplasmic dynein 2 heavy chain 1 (4171 aa).

Residues 1–1598 (MSSDSKDQRK…VLRQVSSEFE (1598 aa)) form a stem region. Residue 115 to 122 (GKELTEGN) participates in ATP binding. 5 coiled-coil regions span residues 164–203 (ANDYNEAFKQLQLLVETMEERSIDELSELVECFEDTCDEL), 629–693 (KQLE…KEEE), 829–861 (DLEELIEENLKTAADWESQFKILKGKAREAERL), 927–1048 (EIAE…KEKR), and 1354–1383 (SRQSLKKSLEQIVDQLNRCQKALNQFLEQK). 4 AAA regions span residues 1599–1823 (YTYE…VLGG), 1883–2100 (EPLG…VRSH), 2184–2432 (VTKE…WVVS), and 2527–2767 (RFAF…PIKY). ATP contacts are provided by residues 1637-1644 (GPAGTGKT), 1921-1928 (GAAGSGKS), 2226-2233 (GTTGCGKQ), and 2565-2572 (GRPGFGRR). The stalk stretch occupies residues 2776-3064 (QLLGYKRLTL…VDLDREQDTI (289 aa)). Coiled coils occupy residues 2790-2877 (ERLK…KEVQ), 2999-3059 (EKIA…DLDR), and 3308-3336 (ELEERSSSLLRDAELKKLELEGLEQLLLQ). 2 AAA regions span residues 3140–3367 (ASLE…IITK) and 3575–3784 (LMDF…FVEQ).

Belongs to the dynein heavy chain family. As to quaternary structure, the cytoplasmic dynein complex 2 is probably composed by a heavy chain che-3 homodimer and a number of light intermediate chains.

The protein resides in the cell projection. It is found in the cilium membrane. The protein localises to the cytoplasm. It localises to the cytoskeleton. In terms of biological role, functions as a motor for intraflagellar retrograde transport in chemosensory neurons. Functions in cilia biogenesis. The chain is Cytoplasmic dynein 2 heavy chain 1 from Caenorhabditis elegans.